Consider the following 348-residue polypeptide: QSGNPFSGRTLLVNSDYSSKLDQTRQAFLSRGDQTNAAKVKYVQEKVGTFYWISNIFLLRDIDVAIQNARAAKARGENPIVGLVLYNLPDRDCSAGESSGELKLSQNGLNRYKNEYVNPFAQKLKAASDVQFAVILEPDAIGNMVTGTSAFCRNARGPQQEAIGYAISQLQASHIHLYLDVANGGWLGWADKLEPTAQEVATILQKAGNNAKIRGFSSNVSNYNPYSTSNPPPYTSGSPSPDESRYATNIANAMRQRGLPTQFIIDQSRVALSGARSEWGQWCNVNPAGFGQPFTTNTNNPNVDAIVWVKPGGESDGQCGMGGAPAAGMWFDAYAQMLTQNAHDEIAR.

Residues Trp52 and Ser54 each contribute to the substrate site. Residues Asp92 and Asp139 each act as proton donor in the active site. The substrate site is built by Asn183, Trp186, Asn222, Trp282, Lys310, and Glu314. The segment covering Asn222–Pro241 has biased composition (low complexity). The interval Asn222–Ser244 is disordered.

The protein belongs to the glycosyl hydrolase 6 (cellulase B) family. In terms of assembly, monomer.

The catalysed reaction is Endohydrolysis of (1-&gt;4)-beta-D-glucosidic linkages in cellulose, lichenin and cereal beta-D-glucans.. Functionally, plays a central role in the recycling of plant biomass. The biological conversion of cellulose to glucose generally requires three types of hydrolytic enzymes: (1) Endoglucanases which cut internal beta-1,4-glucosidic bonds; (2) Exocellobiohydrolases that cut the disaccharide cellobiose from the non-reducing end of the cellulose polymer chain; (3) Beta-1,4-glucosidases which hydrolyze the cellobiose and other short cello-oligosaccharides to glucose. This is Endoglucanase-6B from Humicola insolens (Soft-rot fungus).